Reading from the N-terminus, the 552-residue chain is Chaperonin GroEL (552 aa).

ATP contacts are provided by residues 29–32 (TAGP), Lys-50, 86–90 (DGTTT), Gly-420, and Asp-501.

It belongs to the chaperonin (HSP60) family. As to quaternary structure, forms a cylinder of 14 subunits composed of two heptameric rings stacked back-to-back. Interacts with the co-chaperonin GroES.

The protein resides in the cytoplasm. The enzyme catalyses ATP + H2O + a folded polypeptide = ADP + phosphate + an unfolded polypeptide.. Its function is as follows. Together with its co-chaperonin GroES, plays an essential role in assisting protein folding. The GroEL-GroES system forms a nano-cage that allows encapsulation of the non-native substrate proteins and provides a physical environment optimized to promote and accelerate protein folding. The chain is Chaperonin GroEL from Wolbachia pipientis subsp. Culex pipiens (strain wPip).